The chain runs to 176 residues: Ribosome maturation factor RimM (176 aa).

One can recognise a PRC barrel domain in the interval 96 to 176 (PEDEFYWRDL…QILVDWDPDF (81 aa)).

It belongs to the RimM family. Binds ribosomal protein uS19.

It localises to the cytoplasm. Its function is as follows. An accessory protein needed during the final step in the assembly of 30S ribosomal subunit, possibly for assembly of the head region. Essential for efficient processing of 16S rRNA. May be needed both before and after RbfA during the maturation of 16S rRNA. It has affinity for free ribosomal 30S subunits but not for 70S ribosomes. In Shewanella piezotolerans (strain WP3 / JCM 13877), this protein is Ribosome maturation factor RimM.